We begin with the raw amino-acid sequence, 443 residues long: MTKILTSSQAEELHKSIIAYLSSINASRSCEVLREELQVDSSFDDALCRKYEGLLEKKWTGIARLQKKILDLESKLAGLQTELDTISPTARSTGKDPINWLPTSSRHTFESHRDAVTCVAFHPVFTSLASGSEDCTIKIWDWELGELERTLKGHMRPVSDLDFGGQKGHTILASCSSDLQIKLWDPNKDYANVRTLSGHDHSVSAVRFLRQTDNILISASRDATIRIWDVSTGYCVKVIDSQGSWINDVSPSFDGKWLVTGGRDQAAMVWEVASAKSVASLIGHENFIECCVFAPPSSYKHLAAIAGLKTAPPASSSSEFIATGARDKTIKLWESRGRLIKTLVGHDNWVRGLLFHPGGKYLISVADDKTIRCWDLSQGGRLVKTINAHGHFVSCIRWGPVPVSDVPVETSESTKSSKSDSVKPGFQCVIATGSADSSVRIFT.

The LisH domain maps to 9–41; sequence QAEELHKSIIAYLSSINASRSCEVLREELQVDS. Positions 60–87 form a coiled coil; sequence TGIARLQKKILDLESKLAGLQTELDTIS. WD repeat units lie at residues 111–152, 154–194, 198–238, 241–280, 283–343, 345–384, 388–427, and 429–443; these read SHRD…RTLK, HMRP…ANVR, GHDH…CVKV, SQGS…SVAS, GHEN…IKTL, GHDN…RLVK, AHGH…PGFQ, and VIAT…RIFT.

This sequence belongs to the WD repeat LIS1/nudF family. In terms of assembly, self-associates. Interacts with nudE and dynein.

It localises to the cytoplasm. It is found in the cytoskeleton. Its subcellular location is the spindle pole. In terms of biological role, positively regulates the activity of the minus-end directed microtubule motor protein dynein. May enhance dynein-mediated microtubule sliding by targeting dynein to the microtubule plus end. Required for nuclear migration during vegetative growth as well as development. Required for retrograde early endosome (EE) transport from the hyphal tip. Required for localization of dynein to the mitotic spindle poles. Recruits additional proteins to the dynein complex at SPBs. The protein is Nuclear distribution protein nudF of Aspergillus niger (strain ATCC MYA-4892 / CBS 513.88 / FGSC A1513).